We begin with the raw amino-acid sequence, 135 residues long: Protein NrdI (135 aa).

It belongs to the NrdI family.

In terms of biological role, probably involved in ribonucleotide reductase function. The protein is Protein NrdI of Pectobacterium atrosepticum (strain SCRI 1043 / ATCC BAA-672) (Erwinia carotovora subsp. atroseptica).